A 270-amino-acid chain; its full sequence is Formamidopyrimidine-DNA glycosylase (270 aa).

Proline 2 (schiff-base intermediate with DNA) is an active-site residue. Catalysis depends on glutamate 3, which acts as the Proton donor. The active-site Proton donor; for beta-elimination activity is lysine 58. 3 residues coordinate DNA: histidine 91, arginine 110, and arginine 151. The FPG-type zinc-finger motif lies at 236-270 (FVYGRGGEFCKVCGSTLREIRLGQRASVYCPRCQR). Residue arginine 260 is the Proton donor; for delta-elimination activity of the active site.

The protein belongs to the FPG family. Monomer. Zn(2+) is required as a cofactor.

It catalyses the reaction Hydrolysis of DNA containing ring-opened 7-methylguanine residues, releasing 2,6-diamino-4-hydroxy-5-(N-methyl)formamidopyrimidine.. It carries out the reaction 2'-deoxyribonucleotide-(2'-deoxyribose 5'-phosphate)-2'-deoxyribonucleotide-DNA = a 3'-end 2'-deoxyribonucleotide-(2,3-dehydro-2,3-deoxyribose 5'-phosphate)-DNA + a 5'-end 5'-phospho-2'-deoxyribonucleoside-DNA + H(+). In terms of biological role, involved in base excision repair of DNA damaged by oxidation or by mutagenic agents. Acts as a DNA glycosylase that recognizes and removes damaged bases. Has a preference for oxidized purines, such as 7,8-dihydro-8-oxoguanine (8-oxoG). Has AP (apurinic/apyrimidinic) lyase activity and introduces nicks in the DNA strand. Cleaves the DNA backbone by beta-delta elimination to generate a single-strand break at the site of the removed base with both 3'- and 5'-phosphates. This chain is Formamidopyrimidine-DNA glycosylase, found in Pseudomonas paraeruginosa (strain DSM 24068 / PA7) (Pseudomonas aeruginosa (strain PA7)).